Consider the following 468-residue polypeptide: uncharacterized protein (468 aa).

12 helical membrane-spanning segments follow: residues Leu-13 to Phe-33, Leu-40 to Leu-60, Ala-76 to Ile-96, Leu-112 to Gly-132, Phe-141 to Ala-161, Leu-194 to Leu-214, Val-237 to Thr-257, Pro-260 to Gln-280, Cys-328 to Ile-348, Phe-354 to Gly-374, Ile-414 to Val-434, and Ala-443 to Ile-463.

It belongs to the NhaC Na(+)/H(+) (TC 2.A.35) antiporter family.

The protein resides in the cell membrane. This is an uncharacterized protein from Haemophilus influenzae (strain ATCC 51907 / DSM 11121 / KW20 / Rd).